We begin with the raw amino-acid sequence, 399 residues long: MMNQDTLPNLYDLSLAEMERLMTAWGQPAYRARQIFRQLYVNLVDSPLAMTDLPLALRERLVAETRLAPLAPEQVHVADQGLTRKALFRLENGVLIESVLMIYPDRATVCVSTQAGCGMGCVFCATGTLGLLRNLSPGDIVAQVVWAAREMRRFAAERCISPSLAPPDDDSWWTPDTLEDQGSSEARSISVSRLSNIVFMGMGEPFANYDRWWRAVEILHDPRGLNMGARSMTVSTVGLIPGIRRLATETLPINLAISLHAPDDALRSALMPVNRRYPLAALLEATRDYLAATGRRVSFEYVLLQGKNDEPEHAAKLAALLHGEAGTTPLPLHLVHVNLIPWNPVPGMPLGRSERRRVLTFQRILRERGIACTVRVERGVSIAAACGQLAGARGLNVEC.

Glutamate 97 (proton acceptor) is an active-site residue. In terms of domain architecture, Radical SAM core spans 103 to 381; that stretch reads YPDRATVCVS…CTVRVERGVS (279 aa). Cysteine 110 and cysteine 386 are disulfide-bonded. Positions 117, 121, and 124 each coordinate [4Fe-4S] cluster. S-adenosyl-L-methionine-binding positions include 203-204, serine 235, 258-260, and asparagine 343; these read GE and SLH. Residue cysteine 386 is the S-methylcysteine intermediate of the active site.

It belongs to the radical SAM superfamily. RlmN family. It depends on [4Fe-4S] cluster as a cofactor.

It localises to the cytoplasm. It catalyses the reaction adenosine(2503) in 23S rRNA + 2 reduced [2Fe-2S]-[ferredoxin] + 2 S-adenosyl-L-methionine = 2-methyladenosine(2503) in 23S rRNA + 5'-deoxyadenosine + L-methionine + 2 oxidized [2Fe-2S]-[ferredoxin] + S-adenosyl-L-homocysteine. The enzyme catalyses adenosine(37) in tRNA + 2 reduced [2Fe-2S]-[ferredoxin] + 2 S-adenosyl-L-methionine = 2-methyladenosine(37) in tRNA + 5'-deoxyadenosine + L-methionine + 2 oxidized [2Fe-2S]-[ferredoxin] + S-adenosyl-L-homocysteine. Functionally, specifically methylates position 2 of adenine 2503 in 23S rRNA and position 2 of adenine 37 in tRNAs. The protein is Probable dual-specificity RNA methyltransferase RlmN of Roseiflexus sp. (strain RS-1).